The following is a 431-amino-acid chain: Tyrosine--tRNA ligase (431 aa).

Residue Tyr34 coordinates L-tyrosine. The short motif at 39–48 (PTADSLHIGH) is the 'HIGH' region element. L-tyrosine is bound by residues Tyr171 and Gln175. A 'KMSKS' region motif is present at residues 231 to 235 (KFGKT). Lys234 contacts ATP. The region spanning 353-422 (INVVEALVKT…GKYTILRRGK (70 aa)) is the S4 RNA-binding domain.

This sequence belongs to the class-I aminoacyl-tRNA synthetase family. TyrS type 1 subfamily. Homodimer.

Its subcellular location is the cytoplasm. It carries out the reaction tRNA(Tyr) + L-tyrosine + ATP = L-tyrosyl-tRNA(Tyr) + AMP + diphosphate + H(+). In terms of biological role, catalyzes the attachment of tyrosine to tRNA(Tyr) in a two-step reaction: tyrosine is first activated by ATP to form Tyr-AMP and then transferred to the acceptor end of tRNA(Tyr). This Neisseria meningitidis serogroup A / serotype 4A (strain DSM 15465 / Z2491) protein is Tyrosine--tRNA ligase.